A 96-amino-acid chain; its full sequence is Guanine nucleotide-binding protein alpha-9 subunit (96 aa).

The 95-residue stretch at 2–96 (YFHSTAIILF…ISASLKMVGV (95 aa)) folds into the G-alpha domain. A G1 motif region spans residues 9 to 16 (ILFLNKID). GTP is bound by residues 13 to 16 (NKID) and A69. The interval 67-72 (TSATDT) is G2 motif.

The protein belongs to the G-alpha family. G proteins are composed of 3 units; alpha, beta and gamma. The alpha chain contains the guanine nucleotide binding site. In terms of tissue distribution, expressed in ASJ neurons.

Guanine nucleotide-binding proteins (G proteins) are involved as modulators or transducers in various transmembrane signaling systems. Plays a role in innate immunity and maintaining survival in response to metabolites of E.coli. This might be by regulating the expression and signaling of genes such as lys-8, ins-7 and daf-28. Has a role in lifespan to promote longevity. This Caenorhabditis elegans protein is Guanine nucleotide-binding protein alpha-9 subunit.